The following is a 98-amino-acid chain: MAEINRDDVAHLAQLAHIDMSESELDRMAGELAVIVDSVKSVSEIAGDDAPATSHPIPLSNVLREDTVGHVLSQEQVLSGAPDAEDGRFKVPAILEED.

The disordered stretch occupies residues 76-98 (QVLSGAPDAEDGRFKVPAILEED).

This sequence belongs to the GatC family. Heterotrimer of A, B and C subunits.

The enzyme catalyses L-glutamyl-tRNA(Gln) + L-glutamine + ATP + H2O = L-glutaminyl-tRNA(Gln) + L-glutamate + ADP + phosphate + H(+). The catalysed reaction is L-aspartyl-tRNA(Asn) + L-glutamine + ATP + H2O = L-asparaginyl-tRNA(Asn) + L-glutamate + ADP + phosphate + 2 H(+). In terms of biological role, allows the formation of correctly charged Asn-tRNA(Asn) or Gln-tRNA(Gln) through the transamidation of misacylated Asp-tRNA(Asn) or Glu-tRNA(Gln) in organisms which lack either or both of asparaginyl-tRNA or glutaminyl-tRNA synthetases. The reaction takes place in the presence of glutamine and ATP through an activated phospho-Asp-tRNA(Asn) or phospho-Glu-tRNA(Gln). The sequence is that of Aspartyl/glutamyl-tRNA(Asn/Gln) amidotransferase subunit C from Renibacterium salmoninarum (strain ATCC 33209 / DSM 20767 / JCM 11484 / NBRC 15589 / NCIMB 2235).